Reading from the N-terminus, the 483-residue chain is Altronate oxidoreductase (483 aa).

18–29 (IIQFGEGNFLRA) is a binding site for NAD(+).

This sequence belongs to the mannitol dehydrogenase family. UxaB subfamily.

It catalyses the reaction D-altronate + NAD(+) = keto-D-tagaturonate + NADH + H(+). Its pathway is carbohydrate metabolism; pentose and glucuronate interconversion. This Cronobacter sakazakii (strain ATCC BAA-894) (Enterobacter sakazakii) protein is Altronate oxidoreductase.